Reading from the N-terminus, the 408-residue chain is LL-diaminopimelate aminotransferase (408 aa).

Residues Tyr15 and Gly42 each contribute to the substrate site. Pyridoxal 5'-phosphate contacts are provided by residues Tyr72, 108–109 (SK), Tyr132, Asn187, Tyr218, and 246–248 (SFS). Substrate-binding residues include Lys109, Tyr132, and Asn187. N6-(pyridoxal phosphate)lysine is present on Lys249. Residues Arg257 and Asn292 each contribute to the pyridoxal 5'-phosphate site. The substrate site is built by Asn292 and Arg388.

This sequence belongs to the class-I pyridoxal-phosphate-dependent aminotransferase family. LL-diaminopimelate aminotransferase subfamily. As to quaternary structure, homodimer. Pyridoxal 5'-phosphate is required as a cofactor.

The catalysed reaction is (2S,6S)-2,6-diaminopimelate + 2-oxoglutarate = (S)-2,3,4,5-tetrahydrodipicolinate + L-glutamate + H2O + H(+). It participates in amino-acid biosynthesis; L-lysine biosynthesis via DAP pathway; LL-2,6-diaminopimelate from (S)-tetrahydrodipicolinate (aminotransferase route): step 1/1. Its function is as follows. Involved in the synthesis of meso-diaminopimelate (m-DAP or DL-DAP), required for both lysine and peptidoglycan biosynthesis. Catalyzes the direct conversion of tetrahydrodipicolinate to LL-diaminopimelate. The polypeptide is LL-diaminopimelate aminotransferase (Prochlorococcus marinus (strain MIT 9303)).